A 609-amino-acid chain; its full sequence is UvrABC system protein C (609 aa).

One can recognise a GIY-YIG domain in the interval 13–91 (HQPGVYRMFD…IKAFQPRYNV (79 aa)). The region spanning 201–236 (QQVLEHLIKKMEQASMQLNFEQAAYFRDQIQAIRAV) is the UVR domain.

The protein belongs to the UvrC family. As to quaternary structure, interacts with UvrB in an incision complex.

It localises to the cytoplasm. The UvrABC repair system catalyzes the recognition and processing of DNA lesions. UvrC both incises the 5' and 3' sides of the lesion. The N-terminal half is responsible for the 3' incision and the C-terminal half is responsible for the 5' incision. This Histophilus somni (strain 129Pt) (Haemophilus somnus) protein is UvrABC system protein C.